Consider the following 265-residue polypeptide: Apolipoprotein A-I (265 aa).

Positions 1–16 are cleaved as a signal peptide; it reads MKAAVLIWLFLMGSQA. 2 repeat units span residues 66–87 and 88–109. Residues 66–265 are 10 X approximate tandem repeats; the sequence is LKLLDNWDSL…EEYTKKLSSQ (200 aa). Residue Met108 is modified to Methionine sulfoxide. A 3; half-length repeat occupies 110–120; it reads KDLEEVKAQVQ. 5 tandem repeats follow at residues 121–142, 143–164, 165–186, 187–208, and 209–230. A Methionine sulfoxide modification is found at Met134. One copy of the 9; half-length repeat lies at 231-241; it reads PALDDLRQGLL. The stretch at 242 to 265 is repeat 10; the sequence is PVLESFKVSFLSALEEYTKKLSSQ.

The protein belongs to the apolipoprotein A1/A4/E family. As to quaternary structure, homodimer. Interacts with APOA1BP and CLU. Component of a sperm activating protein complex (SPAP), consisting of APOA1, an immunoglobulin heavy chain, an immunoglobulin light chain and albumin. Interacts with NDRG1. Interacts with SCGB3A2. Interacts with NAXE and YJEFN3. Post-translationally, glycosylated. In terms of processing, palmitoylated. Phosphorylation sites are present in the extracellular medium.

The protein localises to the secreted. Its function is as follows. Participates in the reverse transport of cholesterol from tissues to the liver for excretion by promoting cholesterol efflux from tissues and by acting as a cofactor for the lecithin cholesterol acyltransferase (LCAT). As part of the SPAP complex, activates spermatozoa motility. The chain is Apolipoprotein A-I (APOA1) from Aotus nancymaae (Ma's night monkey).